Here is a 440-residue protein sequence, read N- to C-terminus: Light-independent protochlorophyllide reductase subunit N (440 aa).

The segment at 1–24 (MTCRPALSDSHPPEPGTPSSPSFG) is disordered. [4Fe-4S] cluster is bound by residues Cys-42, Cys-67, and Cys-128.

The protein belongs to the BchN/ChlN family. As to quaternary structure, protochlorophyllide reductase is composed of three subunits; BchL, BchN and BchB. Forms a heterotetramer of two BchB and two BchN subunits. The cofactor is [4Fe-4S] cluster.

The catalysed reaction is chlorophyllide a + oxidized 2[4Fe-4S]-[ferredoxin] + 2 ADP + 2 phosphate = protochlorophyllide a + reduced 2[4Fe-4S]-[ferredoxin] + 2 ATP + 2 H2O. Its pathway is porphyrin-containing compound metabolism; bacteriochlorophyll biosynthesis (light-independent). Functionally, component of the dark-operative protochlorophyllide reductase (DPOR) that uses Mg-ATP and reduced ferredoxin to reduce ring D of protochlorophyllide (Pchlide) to form chlorophyllide a (Chlide). This reaction is light-independent. The NB-protein (BchN-BchB) is the catalytic component of the complex. The polypeptide is Light-independent protochlorophyllide reductase subunit N (Rhodospirillum rubrum (strain ATCC 11170 / ATH 1.1.1 / DSM 467 / LMG 4362 / NCIMB 8255 / S1)).